The sequence spans 117 residues: NADH-ubiquinone oxidoreductase chain 3 (117 aa).

3 helical membrane passes run 3 to 23 (LLLT…IVSF), 56 to 76 (FFLV…LLPL), and 85 to 105 (PMFT…GLIY).

It belongs to the complex I subunit 3 family.

The protein resides in the mitochondrion membrane. The enzyme catalyses a ubiquinone + NADH + 5 H(+)(in) = a ubiquinol + NAD(+) + 4 H(+)(out). Its function is as follows. Core subunit of the mitochondrial membrane respiratory chain NADH dehydrogenase (Complex I) that is believed to belong to the minimal assembly required for catalysis. Complex I functions in the transfer of electrons from NADH to the respiratory chain. The immediate electron acceptor for the enzyme is believed to be ubiquinone. This Tetraodon nigroviridis (Spotted green pufferfish) protein is NADH-ubiquinone oxidoreductase chain 3 (MT-ND3).